The chain runs to 213 residues: ATP synthase peripheral stalk subunit OSCP, mitochondrial (213 aa).

The transit peptide at 1-23 (MAAPAVSGLSRQVRYFSTSVVRP) directs the protein to the mitochondrion. An SIFI-degron motif is present at residues 5 to 23 (AVSGLSRQVRYFSTSVVRP). N6-acetyllysine is present on residues Lys54, Lys60, Lys70, and Lys73. Residue Lys90 is modified to N6-succinyllysine. Lys158 and Lys162 each carry N6-acetyllysine; alternate. An N6-succinyllysine; alternate mark is found at Lys158 and Lys162. N6-acetyllysine occurs at positions 172, 176, and 192. Lys199 carries the post-translational modification N6-succinyllysine.

It belongs to the ATPase delta chain family. As to quaternary structure, component of the ATP synthase complex composed at least of ATP5F1A/subunit alpha, ATP5F1B/subunit beta, ATP5MC1/subunit c (homooctomer), MT-ATP6/subunit a, MT-ATP8/subunit 8, ATP5ME/subunit e, ATP5MF/subunit f, ATP5MG/subunit g, ATP5MK/subunit k, ATP5MJ/subunit j, ATP5F1C/subunit gamma, ATP5F1D/subunit delta, ATP5F1E/subunit epsilon, ATP5PF/subunit F6, ATP5PB/subunit b, ATP5PD/subunit d, ATP5PO/subunit OSCP. ATP synthase complex consists of a soluble F(1) head domain (subunits alpha(3) and beta(3)) - the catalytic core - and a membrane F(0) domain - the membrane proton channel (subunits c, a, 8, e, f, g, k and j). These two domains are linked by a central stalk (subunits gamma, delta, and epsilon) rotating inside the F1 region and a stationary peripheral stalk (subunits F6, b, d, and OSCP). Post-translationally, acetylation at Lys-162 decreases ATP production. Deacetylated by SIRT3. In response to mitochondrial stress, the precursor protein is ubiquitinated by the SIFI complex in the cytoplasm before mitochondrial import, leading to its degradation. Within the SIFI complex, UBR4 initiates ubiquitin chain that are further elongated or branched by KCMF1.

Its subcellular location is the mitochondrion. The protein resides in the mitochondrion inner membrane. Its function is as follows. Subunit OSCP, of the mitochondrial membrane ATP synthase complex (F(1)F(0) ATP synthase or Complex V) that produces ATP from ADP in the presence of a proton gradient across the membrane which is generated by electron transport complexes of the respiratory chain. ATP synthase complex consist of a soluble F(1) head domain - the catalytic core - and a membrane F(1) domain - the membrane proton channel. These two domains are linked by a central stalk rotating inside the F(1) region and a stationary peripheral stalk. During catalysis, ATP synthesis in the catalytic domain of F(1) is coupled via a rotary mechanism of the central stalk subunits to proton translocation. In vivo, can only synthesize ATP although its ATP hydrolase activity can be activated artificially in vitro. Part of the complex F(0) domain. Part of the complex F(0) domain and the peripheric stalk, which acts as a stator to hold the catalytic alpha(3)beta(3) subcomplex and subunit a/ATP6 static relative to the rotary elements. The sequence is that of ATP synthase peripheral stalk subunit OSCP, mitochondrial from Plecturocebus moloch (Dusky titi monkey).